The following is a 199-amino-acid chain: Imidazoleglycerol-phosphate dehydratase (199 aa).

It belongs to the imidazoleglycerol-phosphate dehydratase family.

Its subcellular location is the cytoplasm. The enzyme catalyses D-erythro-1-(imidazol-4-yl)glycerol 3-phosphate = 3-(imidazol-4-yl)-2-oxopropyl phosphate + H2O. The protein operates within amino-acid biosynthesis; L-histidine biosynthesis; L-histidine from 5-phospho-alpha-D-ribose 1-diphosphate: step 6/9. The polypeptide is Imidazoleglycerol-phosphate dehydratase (Bifidobacterium longum (strain NCC 2705)).